Consider the following 146-residue polypeptide: Hemoglobin subunit beta (146 aa).

The Globin domain maps to 2–146 (QWSESERTII…VVSALGKQYH (145 aa)). Heme b is bound by residues His-63 and His-92.

Belongs to the globin family. As to quaternary structure, heterotetramer of two alpha chains and two beta chains. In terms of tissue distribution, red blood cells.

In terms of biological role, involved in oxygen transport from gills to the various peripheral tissues. In Pogonophryne scotti (Saddleback plunderfish), this protein is Hemoglobin subunit beta (hbb).